Here is a 500-residue protein sequence, read N- to C-terminus: Xylan O-acetyltransferase 2 (500 aa).

Residues Met-1–Arg-25 are Cytoplasmic-facing. A helical; Signal-anchor for type II membrane protein membrane pass occupies residues Leu-26 to Phe-43. At Arg-44–Ala-500 the chain is on the lumenal side. The tract at residues Pro-84–Lys-116 is disordered. Over residues Gly-91–Arg-102 the composition is skewed to basic and acidic residues. The segment covering His-103 to Lys-116 has biased composition (basic residues). 4 cysteine pairs are disulfide-bonded: Cys-143-Cys-194, Cys-165-Cys-231, Cys-174-Cys-472, and Cys-388-Cys-468. Residues Asn-144 and Asn-154 are each glycosylated (N-linked (GlcNAc...) asparagine). Positions Gly-218–Ser-220 match the GDS motif motif. Ser-220 serves as the catalytic Nucleophile. Residues Asn-260 and Asn-416 are each glycosylated (N-linked (GlcNAc...) asparagine). Catalysis depends on Asp-467, which acts as the Proton donor. Positions Asp-467–His-470 match the DXXH motif motif. His-470 functions as the Proton acceptor in the catalytic mechanism.

Belongs to the PC-esterase family. TBL subfamily. In terms of tissue distribution, expressed at low levels in roots and leaves.

Its subcellular location is the golgi apparatus membrane. Its function is as follows. Xylan acetyltransferase required for 2-O- and 3-O-monoacetylation of xylosyl residues in xylan. Catalyzes the 2-O-acetylation of xylan, followed by nonenzymatic acetyl migration to the O-3 position, resulting in products that are monoacetylated at both O-2 and O-3 positions. This chain is Xylan O-acetyltransferase 2, found in Oryza sativa subsp. japonica (Rice).